A 274-amino-acid polypeptide reads, in one-letter code: NAD(P)H dehydrogenase [quinone] 1 (274 aa).

A2 bears the N-acetylalanine mark. Residues H12, F18 to N19, and Q67 each bind FAD. Position 82 is a phosphoserine (S82). Position 104–107 (L104–F107) interacts with FAD. A126–T128 provides a ligand contact to substrate. Residues T148–G151, Y156, and R201 each bind FAD. The important for apoenzyme conformational stability stretch occupies residues P225 to K274. K251 participates in a covalent cross-link: Glycyl lysine isopeptide (Lys-Gly) (interchain with G-Cter in SUMO2).

Belongs to the NAD(P)H dehydrogenase (quinone) family. In terms of assembly, homodimer. Interacts with PDLIM4 isoform 2; this interaction stabilizes PDLIM4 isoform 2 in response to oxidative stress and protects it from ubiquitin-independent degradation by the core 20S proteasome. Interacts with TP73 (via SAM domain); this interaction is NADH-dependent, stabilizes TP73 in response to oxidative stress and protects it from ubiquitin-independent degradation by the 20S proteasome. Interacts with TP53; this interaction is NADH-dependent, stabilizes TP53 in response to oxidative stress and protects it from ubiquitin-independent degradation by the 20S proteasome. FAD serves as cofactor.

The protein localises to the cytoplasm. The protein resides in the cytosol. The enzyme catalyses a quinone + NADH + H(+) = a quinol + NAD(+). The catalysed reaction is a quinone + NADPH + H(+) = a quinol + NADP(+). It carries out the reaction ubiquinone-10 + NADH + H(+) = ubiquinol-10 + NAD(+). It catalyses the reaction menadione + NADH + H(+) = menadiol + NAD(+). Its function is as follows. Flavin-containing quinone reductase that catalyzes two-electron reduction of quinones to hydroquinones using either NADH or NADPH as electron donors. In a ping-pong kinetic mechanism, the electrons are sequentially transferred from NAD(P)H to flavin cofactor and then from reduced flavin to the quinone, bypassing the formation of semiquinone and reactive oxygen species. Regulates cellular redox state primarily through quinone detoxification. Reduces components of plasma membrane redox system such as coenzyme Q and vitamin quinones, producing antioxidant hydroquinone forms. In the process may function as superoxide scavenger to prevent hydroquinone oxidation and facilitate excretion. Alternatively, can activate quinones and their derivatives by generating redox reactive hydroquinones with DNA cross-linking antitumor potential. Acts as a gatekeeper of the core 20S proteasome known to degrade proteins with unstructured regions. Upon oxidative stress, interacts with tumor suppressors TP53 and TP73 in a NADH-dependent way and inhibits their ubiquitin-independent degradation by the 20S proteasome. The protein is NAD(P)H dehydrogenase [quinone] 1 (Nqo1) of Rattus norvegicus (Rat).